Here is a 462-residue protein sequence, read N- to C-terminus: Centrosomal protein of 55 kDa (462 aa).

The span at 1-11 shows a compositional bias: basic and acidic residues; the sequence is MSSRSPKDLIK. Positions 1-25 are disordered; it reads MSSRSPKDLIKSKWGSRPSSSKSDT. A compositionally biased stretch (low complexity) spans 12–23; it reads SKWGSRPSSSKS. Coiled coils occupy residues 50–185 and 228–400; these read KVAN…QQWL and YLQE…KQLH. Residues Ser96 and Ser99 each carry the phosphoserine modification. Positions 157–235 are interaction with TSG101; the sequence is ANCFNSSMNS…EGYLQEEKQK (79 aa). The tract at residues 160–214 is interaction with PDCD6IP; it reads FNSSMNSIHEKEMQLKDALEKNQQWLVYDQQREAYVKGLLAKIFELEKRTETAAA. Residues 354–462 form a required for localization to the interphase centrosome and to the midbody during cytokinesis region; the sequence is QMQACTLDFE…LLVHVEYCMK (109 aa). 2 positions are modified to phosphoserine: Ser423 and Ser426. Thr428 is subject to Phosphothreonine. Ser434 is subject to Phosphoserine; by PLK1.

In terms of assembly, homodimer. Interacts (phosphorylated on Ser-423 and Ser-426) with PLK1; the interaction is indirect via the MTMR3:MTMR4 heterooligomer, occurs during early mitosis, regulates the phosphorylation of CEP55 by PLK1 and its recruitment to the midbody where it can mediate cell abscission. Interacts with AKAP9/CG-NAP; the interaction occurs in interphase and is lost upon mitotic entry. Interacts with PCNT/Kendrin; the interaction occurs in interphase and is lost upon mitotic entry. Directly interacts with PDCD6IP; this interaction is required for PDCD6IP targeting to the midbody; CEP55 binds PDCD6IP in a 2:1 stoichiometry; PDCD6IP competes with TSG101 for the same binding site. Interacts with TSG101; TSG101 competes with PDCD6IP for the same binding site; interaction is required for cytokinesis. Interacts with MVB12A, VPS37B, VPS37C and VPS28. Post-translationally, there is a hierachy of phosphorylation, where both Ser-423 and Ser-426 are phosphorylated at the onset of mitosis, prior to Ser-434. Phosphorylation at Ser-423 and Ser-426 is required for dissociation from the centrosome at the G2/M boundary. Phosphorylation at the 3 sites, Ser-423, Ser-426 and Ser-434, is required for protein function at the final stages of cell division to complete cytokinesis successfully.

Its subcellular location is the cytoplasm. The protein resides in the cytoskeleton. The protein localises to the microtubule organizing center. It localises to the centrosome. It is found in the centriole. Its subcellular location is the cleavage furrow. The protein resides in the midbody. The protein localises to the midbody ring. Functionally, plays a role in mitotic exit and cytokinesis. Recruits PDCD6IP and TSG101 to midbody during cytokinesis. Required for successful completion of cytokinesis. Not required for microtubule nucleation. Plays a role in the development of the brain and kidney. In Rattus norvegicus (Rat), this protein is Centrosomal protein of 55 kDa.